The primary structure comprises 795 residues: Myosin light chain kinase 3 (795 aa).

Ser155 is modified (phosphoserine). Disordered regions lie at residues 236–257 and 305–328; these read GPGQVPLPTEAESRLPETASEN and SSGPLPQPLGPLTPDSDIHSGDAL. Residues Ser351 and Ser432 each carry the phosphoserine modification. Residues 367-452 form a disordered region; that stretch reads DQIPKGARPF…GPGRTEAGRL (86 aa). In terms of domain architecture, Protein kinase spans 491 to 746; the sequence is VSQHEVLGGG…ATQCLKHEWL (256 aa). ATP contacts are provided by residues 497 to 505 and Lys520; that span reads LGGGRFGQV. Asp612 serves as the catalytic Proton acceptor.

It belongs to the protein kinase superfamily. CAMK Ser/Thr protein kinase family. Mg(2+) is required as a cofactor. Post-translationally, phosphorylated on serine residues. As to expression, restricted to cardiomyocytes (at protein level). Down-regulated in heart after experimental myocardial infarction at the protein level; no significant changes at the mRNA level.

The protein localises to the cytoplasm. The enzyme catalyses L-seryl-[myosin light chain] + ATP = O-phospho-L-seryl-[myosin light chain] + ADP + H(+). It catalyses the reaction L-threonyl-[myosin light chain] + ATP = O-phospho-L-threonyl-[myosin light chain] + ADP + H(+). Its function is as follows. Kinase that phosphorylates MYL2 in vitro. Has been proposed to be calmodulin-dependent, although MYL2 phosphorylation has also been observed in the presence or absence of calmodulin. Promotes sarcomere formation in cardiomyocytes and increases cardiomyocyte contractility. The chain is Myosin light chain kinase 3 (Mylk3) from Mus musculus (Mouse).